The sequence spans 377 residues: 3-dehydroquinate synthase (377 aa).

NAD(+) contacts are provided by residues 115–119, 139–140, Lys152, and Lys161; these read GVIGD and TS. 3 residues coordinate Zn(2+): Glu194, His256, and His275.

It belongs to the sugar phosphate cyclases superfamily. Dehydroquinate synthase family. Requires NAD(+) as cofactor. Co(2+) is required as a cofactor. The cofactor is Zn(2+).

It is found in the cytoplasm. It carries out the reaction 7-phospho-2-dehydro-3-deoxy-D-arabino-heptonate = 3-dehydroquinate + phosphate. Its pathway is metabolic intermediate biosynthesis; chorismate biosynthesis; chorismate from D-erythrose 4-phosphate and phosphoenolpyruvate: step 2/7. Its function is as follows. Catalyzes the conversion of 3-deoxy-D-arabino-heptulosonate 7-phosphate (DAHP) to dehydroquinate (DHQ). This Rhizobium meliloti (strain 1021) (Ensifer meliloti) protein is 3-dehydroquinate synthase.